An 83-amino-acid chain; its full sequence is High-potential iron-sulfur protein (83 aa).

Cysteine 43, cysteine 46, cysteine 61, and cysteine 75 together coordinate [4Fe-4S] cluster.

Belongs to the high-potential iron-sulfur protein (HiPIP) family. Homodimer.

Its subcellular location is the periplasm. Its function is as follows. Specific class of high-redox-potential 4Fe-4S ferredoxins. Functions in anaerobic electron transport in most purple and in some other photosynthetic bacteria and in at least one genus (Paracoccus) of halophilic, denitrifying bacteria. This is High-potential iron-sulfur protein from Thiocystis violacea.